A 609-amino-acid polypeptide reads, in one-letter code: tRNA uridine 5-carboxymethylaminomethyl modification enzyme MnmG (609 aa).

FAD contacts are provided by residues 11-16, valine 123, and threonine 178; that span reads GAGHAG. 270 to 284 provides a ligand contact to NAD(+); it reads GPRYCPSIEDKVVRF. Glutamine 367 provides a ligand contact to FAD.

It belongs to the MnmG family. Homodimer. Heterotetramer of two MnmE and two MnmG subunits. FAD is required as a cofactor.

Its subcellular location is the cytoplasm. NAD-binding protein involved in the addition of a carboxymethylaminomethyl (cmnm) group at the wobble position (U34) of certain tRNAs, forming tRNA-cmnm(5)s(2)U34. The polypeptide is tRNA uridine 5-carboxymethylaminomethyl modification enzyme MnmG (Mycoplasmopsis synoviae (strain 53) (Mycoplasma synoviae)).